The primary structure comprises 393 residues: tRNA(Met) cytidine acetate ligase (393 aa).

ATP contacts are provided by glycine 81, asparagine 142, and arginine 167.

Belongs to the TmcAL family.

Its subcellular location is the cytoplasm. It carries out the reaction cytidine(34) in elongator tRNA(Met) + acetate + ATP = N(4)-acetylcytidine(34) in elongator tRNA(Met) + AMP + diphosphate. Its function is as follows. Catalyzes the formation of N(4)-acetylcytidine (ac(4)C) at the wobble position of elongator tRNA(Met), using acetate and ATP as substrates. First activates an acetate ion to form acetyladenylate (Ac-AMP) and then transfers the acetyl group to tRNA to form ac(4)C34. The chain is tRNA(Met) cytidine acetate ligase from Bacillus cereus (strain ATCC 10987 / NRS 248).